A 210-amino-acid chain; its full sequence is MMSQVSHSQEGSGRFWNKFKSSTKSLSTSLAHLSIKAEKDGDTVNTTLVHKGLVKFYENQHPFQGFPGWLGEKEDLPNERKILDTQVKHDMKKQNSRHFSPSFSNRRKASSEDPMGTPSSNGNTPEYTPASKSFQDIYNNHTSSSSATPRRASSRPTRPSAGQEFRASLGRSKTSNSFNTSSTPTPPPDASSGVMAMKDRLKRRNNDYGF.

Met1 carries the N-acetylmethionine modification. Residue Met2 is modified to N-acetylserine. The segment at 88 to 210 is disordered; it reads KHDMKKQNSR…LKRRNNDYGF (123 aa). Ser102 bears the Phosphoserine mark. A compositionally biased stretch (polar residues) spans 117–141; that stretch reads TPSSNGNTPEYTPASKSFQDIYNNH. Low complexity-rich tracts occupy residues 142–161 and 172–183; these read TSSS…RPSA and SKTSNSFNTSST.

Interacts physically with SEC1.

Its function is as follows. Involved in secretion. Component of the secretory vesicle docking complex. This Saccharomyces cerevisiae (strain ATCC 204508 / S288c) (Baker's yeast) protein is Protein MSO1 (MSO1).